The primary structure comprises 566 residues: MFAQPFDHAFNDLFSQYVDMDSSMVDGNKDVSIPSDFDQIFSLDSLSSDCGDHSPPVPTKPTHQSPQPWATDLWSLPQDAASSASQCSFTFQDTVHPSAVSDLSFHLEAPPTSHPVPAVTCKASSRSPSTPPATPHHKSTKSALVTPKSIRRHRDSHERKLLRKQSFSPSLMRPSQLQAGRMMYPEAWAQRFQNFSLHSSGEHLPLSPPPSDILVQHENTPADNVVTHMNHSTEGLSRNPAEMPSHYETGIFNQSPAISMPSPSAKLLAQQQQHNYLSQSNNSTMATSSPPSGDDIFSSPHSSDPQSLSSWHSDSLGGSALPFTPELQAHDGQAWWPSMPSRVPRQPSYQHVVSSPAPQRSIQSNNQHDLMQGGLMIQFDSSFDGSTSADPSFSSVVTSAPMPQENQNMYSHIPVTPQKYMNLSAYATPPVQHTSRSPSLSPRGRGSPTQGSPLRNEASTKTSPHRRGYHGRKLSSQSMNTPKPVKGPNSSSPGSGSNKSLTVSFVNFTPNDSKKILTGVAPSGSSKTKARREQEARDRRRKLSEAAINAVRKAGGDVEALEAVLC.

Disordered regions lie at residues valine 116 to proline 174, serine 232 to leucine 316, alanine 334 to serine 364, serine 381 to alanine 400, and proline 429 to lysine 542. 2 stretches are compositionally biased toward polar residues: residues glutamine 165 to proline 174 and alanine 269 to proline 291. The span at serine 298–leucine 316 shows a compositional bias: low complexity. Composition is skewed to polar residues over residues proline 347 to serine 364 and serine 381 to threonine 398. The span at serine 435 to proline 448 shows a compositional bias: low complexity. Over residues threonine 449–threonine 462 the composition is skewed to polar residues. A compositionally biased stretch (basic residues) spans serine 463 to lysine 473. Low complexity predominate over residues proline 482–serine 500. A compositionally biased stretch (polar residues) spans leucine 501–asparagine 511.

It belongs to the wetA family.

In terms of biological role, brlA, abaA and wetA are pivotal regulators of conidiophore development and conidium maturation. They act individually and together to regulate their own expression and that of numerous other sporulation-specific genes. Plays an essential role in the completion of conidial maturation and is essential for trehalose biogenesis in conidia. Negatively regulates expression of the melanin biosynthetic gene cluster. Also plays an a role in the early phase of fungal growth including proper hyphal branching. In Aspergillus fumigatus (strain ATCC MYA-4609 / CBS 101355 / FGSC A1100 / Af293) (Neosartorya fumigata), this protein is Developmental regulatory protein wetA.